Reading from the N-terminus, the 402-residue chain is Thyroid hormone receptor alpha (402 aa).

The tract at residues 1-22 (MEQKPSTLDPLSEPEDTRWLDG) is disordered. A modulating region spans residues 1 to 50 (MEQKPSTLDPLSEPEDTRWLDGKRKRKSSQCLVKSSMSGYIPSYLDKDEQ). Serine 12 is subject to Phosphoserine; by CK2. Position 28 is a phosphoserine (serine 28). Zn(2+)-binding residues include cysteine 51, cysteine 54, cysteine 68, cysteine 71, cysteine 89, cysteine 95, cysteine 105, and cysteine 108. 2 consecutive NR C4-type zinc fingers follow at residues 51-71 (CVVCGDKATGYHYRCITCEGC) and 89-113 (CKYDGCCVIDKITRNQCQLCRFKKC). The segment at residues 51 to 125 (CVVCGDKATG…VGMAMDLVLD (75 aa)) is a DNA-binding region (nuclear receptor). The NR LBD domain occupies 161–402 (EEWELIHVVT…ELFPPLFLEV (242 aa)). Arginine 226 and serine 275 together coordinate 3,3',5-triiodo-L-thyronine.

This sequence belongs to the nuclear hormone receptor family. NR1 subfamily. As to quaternary structure, probably interacts with SFPQ.

Its subcellular location is the nucleus. In terms of biological role, nuclear hormone receptor that can act as a repressor or activator of transcription. High affinity receptor for thyroid hormones, including triiodothyronine and thyroxine. The protein is Thyroid hormone receptor alpha (THRA) of Aptenodytes patagonicus (King penguin).